We begin with the raw amino-acid sequence, 702 residues long: A-type inclusion protein A25 homolog (702 aa).

The tract at residues 342 to 380 is disordered; the sequence is TNTGIEEPHATGGDKEDQPIKVVHPPNNDKDDAIKSYNP. The segment covering 347-360 has biased composition (basic and acidic residues); it reads EEPHATGGDKEDQP. Coiled-coil stretches lie at residues 420-522 and 548-692; these read NGGE…RDGK and EIDK…NNKT.

This sequence belongs to the poxviridae A25 protein family. As to quaternary structure, interacts (via N-terminus) with protein A26.

Its subcellular location is the virion. Functionally, structural protein that forms a matrix surrounding the mature virion (MV) through interaction with protein A26. Presence of protein A25 in the virion structurally prevents direct virus-cell fusion mechanism. The protein is A-type inclusion protein A25 homolog of Variola virus (isolate Human/India/Ind3/1967) (VARV).